The primary structure comprises 345 residues: Trans-enoyl reductase tndF (345 aa).

Residues Met1–Lys26 are disordered. Residues Cys44 to Arg49, Ser168 to Val171, Ser191 to His194, Tyr209, and Leu244 to Asp245 contribute to the NADP(+) site.

It belongs to the zinc-containing alcohol dehydrogenase family.

Its pathway is secondary metabolite biosynthesis; terpenoid biosynthesis. Functionally, trans-enoyl reductase; part of the gene cluster that mediates the biosynthesis of talaronoid C, a fusicoccane diterpenoid with an unprecedented tricyclic 5/8/6 ring system. The first step in the pathway is performed by the fusicoccadiene synthase tndC that possesses both prenyl transferase and terpene cyclase activity, converting isopentenyl diphosphate and dimethylallyl diphosphate into geranylgeranyl diphosphate (GGDP) and further converting GGDP into talarodiene, a precursor for talaronoid C. The remaining enzymes from the cluster include the cytochrome P450 monooxygenase tndB, the aldehyde reductase tndE and the alcohol dehydrogenase tndF that are involved in the conversion of talarodiene into talaronoid C. The chain is Trans-enoyl reductase tndF from Aspergillus flavipes.